The primary structure comprises 292 residues: Trimeric intracellular cation channel type B (292 aa).

Over 1–16 the chain is Lumenal; sequence MEYPWDDLTLAFSRTS. The chain crosses the membrane as a helical span at residues 17 to 34; it reads MFPFFDIAHYLVSVMALK. Over 35-47 the chain is Cytoplasmic; it reads QRPGAVAAAWNNP. The chain crosses the membrane as a helical span at residues 48 to 69; that stretch reads LASWLSAMLHCFGGGILSCMLL. The Lumenal portion of the chain corresponds to 70-82; that stretch reads AESPLKFLTNHTN. A helical transmembrane segment spans residues 83–100; sequence ILLASSIWYIVFFCPRDL. Residues 101-103 are Cytoplasmic-facing; sequence VSQ. The chain crosses the membrane as a helical span at residues 104 to 122; that stretch reads GYSYQPIQFLAAGMKEVTR. A 1,2-diacyl-sn-glycero-3-phospho-(1D-myo-inositol-4,5-bisphosphate) contacts are provided by K118 and R122. The Lumenal portion of the chain corresponds to 123–140; it reads TWKIVGGVSDANSYYRNA. The chain crosses the membrane as a helical span at residues 141–158; the sequence is WIVMIVVGWARGAGGAVV. The Cytoplasmic portion of the chain corresponds to 159–178; it reads TACEQLLKGDWKPEGDEWLK. Residues 179 to 195 traverse the membrane as a helical segment; that stretch reads MSFPCKITLLGSIMFTF. The Lumenal portion of the chain corresponds to 196 to 206; that stretch reads QHTRHLAISKH. The chain crosses the membrane as a helical span at residues 207-225; sequence DLMFLYTIFLVTIKVTMMM. Over 226–292 the chain is Cytoplasmic; sequence TKDTAVTLTP…GAKRHAKKED (67 aa). Residues 248–292 are disordered; that stretch reads RQQQQFSSSEKKTEVKPSSNGSASSASKRGAEPSGGAKRHAKKED. Over residues 265 to 274 the composition is skewed to low complexity; sequence SSNGSASSAS.

Belongs to the TMEM38 family. Homotrimer; conformation seems to be controled by binding to diacylglycerol (DAG). In terms of tissue distribution, widely expressed.

It is found in the endoplasmic reticulum membrane. It carries out the reaction K(+)(in) = K(+)(out). Channel activity is activated by increased cytosolic Ca(2+) levels and blocked by luminal high Ca(2+) levels. Intracellular monovalent cation channel required for maintenance of rapid intracellular calcium release. Acts as a potassium counter-ion channel that functions in synchronization with calcium release from intracellular stores. Activated by increased cytosolic Ca(2+) levels. The chain is Trimeric intracellular cation channel type B (Tmem38b) from Mus musculus (Mouse).